The primary structure comprises 77 residues: UPF0401 protein UTI89_C4989 (77 aa).

This sequence belongs to the UPF0401 family.

The polypeptide is UPF0401 protein UTI89_C4989 (Escherichia coli (strain UTI89 / UPEC)).